A 471-amino-acid chain; its full sequence is MKSAVETLSPTRAKLTVEVPFEELKPSLDAAYKQIAKQINVPGFRRGKVPPAIIDRQVGRGAVLDQAINDVVPQKYVEALQANSLQPLAQPEIEVTKFEDNQALEFTAEVDIRPEIALPDYDGVEAQVDDIELSDADVEEQVEALRERFATLIDVERPAAEGDFVVMDLVATRDGEPIEGAEVSGMSYRVGRGGMLDGLDEALVGMSAGDEKTFQSELVGGDMVGEAVDVAVTVSQVQEQELPELDDEFAQMASEFDTVEELTADVRERLGRGRRLEQAAAARDAVLEQLLDRVEVPLPEVVVTDELNARRQNVEQQLAYAGITMEKYLEDEGQTMEEFEADLERRVRDAVAAQFLLDEVAKKEEFGIDQAELSEHLVRRAQQSGQDPQEFANHMFEHNHIPELVQEILRGKALARIVEAAVVKDGSGNVVELKNLRPDGTIGEPEDEIEAETEIEIEPAAETDTEADTEQ.

A PPIase FKBP-type domain is found at 162–243 (GDFVVMDLVA…VSQVQEQELP (82 aa)). The disordered stretch occupies residues 436-471 (LRPDGTIGEPEDEIEAETEIEIEPAAETDTEADTEQ). Positions 444–471 (EPEDEIEAETEIEIEPAAETDTEADTEQ) are enriched in acidic residues.

Belongs to the FKBP-type PPIase family. Tig subfamily.

Its subcellular location is the cytoplasm. The catalysed reaction is [protein]-peptidylproline (omega=180) = [protein]-peptidylproline (omega=0). Functionally, involved in protein export. Acts as a chaperone by maintaining the newly synthesized protein in an open conformation. Functions as a peptidyl-prolyl cis-trans isomerase. This chain is Trigger factor, found in Nocardioides sp. (strain ATCC BAA-499 / JS614).